The chain runs to 82 residues: Large ribosomal subunit protein bL31B (82 aa).

The protein belongs to the bacterial ribosomal protein bL31 family. Type B subfamily. Part of the 50S ribosomal subunit.

The polypeptide is Large ribosomal subunit protein bL31B (Pectobacterium atrosepticum (strain SCRI 1043 / ATCC BAA-672) (Erwinia carotovora subsp. atroseptica)).